The following is a 104-amino-acid chain: Interferon alpha-inducible protein 27-like protein 1 (104 aa).

Helical transmembrane passes span 14-34 (VAAVVGGVVAVGTVLVALSAM), 59-79 (GGGVAAGSLVAILQSVGAAGL), and 81-101 (VTSKVIGGFAGTALGAWLGSP).

This sequence belongs to the IFI6/IFI27 family.

It is found in the membrane. Plays a role in the apoptotic process and has a pro-apoptotic activity. The protein is Interferon alpha-inducible protein 27-like protein 1 of Homo sapiens (Human).